Reading from the N-terminus, the 420-residue chain is Transcriptional adapter 2-beta (420 aa).

A ZZ-type zinc finger spans residues 4 to 59; it reads LSKKYCVYCLADVTSLRLRCTECQDIELCTDCFSAGAEIGNHRRWHGYQLVDGGRF. Positions 9, 12, 23, 26, 32, 35, 45, and 49 each coordinate Zn(2+). The 54-residue stretch at 65–118 folds into the SANT domain; sequence EAEGGWTSREEQLLLDAIEQFGFGNWEDMAAHVGASRTPTEVMEHYVTMYIHGN. The interval 303–333 is disordered; that stretch reads EESAEYEAARHKREKRKENKNIANSKRGRED.

It is found in the nucleus. Its function is as follows. Transcriptional coactivator. The protein is Transcriptional adapter 2-beta (tada2b) of Xenopus laevis (African clawed frog).